The chain runs to 27 residues: Caerulein precursor fragment R7 (27 aa).

In terms of tissue distribution, expressed by the skin glands.

The protein localises to the secreted. In terms of biological role, antimicrobial peptide. The sequence is that of Caerulein precursor fragment R7 from Xenopus ruwenzoriensis (Uganda clawed frog).